The primary structure comprises 285 residues: 4-diphosphocytidyl-2-C-methyl-D-erythritol kinase (285 aa).

Residue lysine 14 is part of the active site. 97–107 (PMGGGIGGGSS) serves as a coordination point for ATP. Aspartate 139 is an active-site residue.

The protein belongs to the GHMP kinase family. IspE subfamily.

It carries out the reaction 4-CDP-2-C-methyl-D-erythritol + ATP = 4-CDP-2-C-methyl-D-erythritol 2-phosphate + ADP + H(+). It functions in the pathway isoprenoid biosynthesis; isopentenyl diphosphate biosynthesis via DXP pathway; isopentenyl diphosphate from 1-deoxy-D-xylulose 5-phosphate: step 3/6. Functionally, catalyzes the phosphorylation of the position 2 hydroxy group of 4-diphosphocytidyl-2C-methyl-D-erythritol. This Tolumonas auensis (strain DSM 9187 / NBRC 110442 / TA 4) protein is 4-diphosphocytidyl-2-C-methyl-D-erythritol kinase.